A 29-amino-acid polypeptide reads, in one-letter code: Cyclotide mech-7 (29 aa).

The cyclopeptide (Gly-Asp) cross-link spans 1 to 29 (GIPICGETCTIGTCNTPGCTCSWPVCTRD). 3 cysteine pairs are disulfide-bonded: Cys5–Cys19, Cys9–Cys21, and Cys14–Cys26.

Post-translationally, this is a cyclic peptide. In terms of processing, contains 3 disulfide bonds.

Functionally, probably participates in a plant defense mechanism (Potential). Binds to and induces leakage in phospholipd membranes, particularly ones containing 1-palmitoyl-2-oleophosphatidylethanolamine (POPE). This chain is Cyclotide mech-7, found in Melicytus chathamicus (Chatham Island mahoe).